A 125-amino-acid chain; its full sequence is Small ribosomal subunit protein uS12 (125 aa).

At Asp89 the chain carries 3-methylthioaspartic acid.

It belongs to the universal ribosomal protein uS12 family. As to quaternary structure, part of the 30S ribosomal subunit. Contacts proteins S8 and S17. May interact with IF1 in the 30S initiation complex.

In terms of biological role, with S4 and S5 plays an important role in translational accuracy. Functionally, interacts with and stabilizes bases of the 16S rRNA that are involved in tRNA selection in the A site and with the mRNA backbone. Located at the interface of the 30S and 50S subunits, it traverses the body of the 30S subunit contacting proteins on the other side and probably holding the rRNA structure together. The combined cluster of proteins S8, S12 and S17 appears to hold together the shoulder and platform of the 30S subunit. The chain is Small ribosomal subunit protein uS12 from Acidovorax sp. (strain JS42).